The following is a 369-amino-acid chain: 4-hydroxy-3-methylbut-2-en-1-yl diphosphate synthase (flavodoxin) (369 aa).

C270, C273, C305, and E312 together coordinate [4Fe-4S] cluster.

The protein belongs to the IspG family. Requires [4Fe-4S] cluster as cofactor.

It carries out the reaction (2E)-4-hydroxy-3-methylbut-2-enyl diphosphate + oxidized [flavodoxin] + H2O + 2 H(+) = 2-C-methyl-D-erythritol 2,4-cyclic diphosphate + reduced [flavodoxin]. The protein operates within isoprenoid biosynthesis; isopentenyl diphosphate biosynthesis via DXP pathway; isopentenyl diphosphate from 1-deoxy-D-xylulose 5-phosphate: step 5/6. Functionally, converts 2C-methyl-D-erythritol 2,4-cyclodiphosphate (ME-2,4cPP) into 1-hydroxy-2-methyl-2-(E)-butenyl 4-diphosphate. The chain is 4-hydroxy-3-methylbut-2-en-1-yl diphosphate synthase (flavodoxin) from Pseudomonas putida (strain ATCC 700007 / DSM 6899 / JCM 31910 / BCRC 17059 / LMG 24140 / F1).